Consider the following 137-residue polypeptide: Large-conductance mechanosensitive channel (137 aa).

2 helical membrane-spanning segments follow: residues phenylalanine 10–glycine 30 and glycine 76–valine 96.

It belongs to the MscL family. Homopentamer.

It is found in the cell inner membrane. Functionally, channel that opens in response to stretch forces in the membrane lipid bilayer. May participate in the regulation of osmotic pressure changes within the cell. The polypeptide is Large-conductance mechanosensitive channel (Yersinia pseudotuberculosis serotype O:1b (strain IP 31758)).